Consider the following 308-residue polypeptide: Aspartate carbamoyltransferase catalytic subunit (308 aa).

Carbamoyl phosphate is bound by residues Arg59 and Thr60. Lys87 contributes to the L-aspartate binding site. Positions 109, 139, and 142 each coordinate carbamoyl phosphate. L-aspartate is bound by residues Arg172 and Arg224. Residues Ala265 and Pro266 each coordinate carbamoyl phosphate.

It belongs to the aspartate/ornithine carbamoyltransferase superfamily. ATCase family. In terms of assembly, heterododecamer (2C3:3R2) of six catalytic PyrB chains organized as two trimers (C3), and six regulatory PyrI chains organized as three dimers (R2).

It carries out the reaction carbamoyl phosphate + L-aspartate = N-carbamoyl-L-aspartate + phosphate + H(+). It participates in pyrimidine metabolism; UMP biosynthesis via de novo pathway; (S)-dihydroorotate from bicarbonate: step 2/3. Functionally, catalyzes the condensation of carbamoyl phosphate and aspartate to form carbamoyl aspartate and inorganic phosphate, the committed step in the de novo pyrimidine nucleotide biosynthesis pathway. This is Aspartate carbamoyltransferase catalytic subunit from Streptococcus thermophilus (strain ATCC BAA-491 / LMD-9).